The following is a 532-amino-acid chain: Putative L-lactate permease (532 aa).

Transmembrane regions (helical) follow at residues 23–43, 56–76, 101–121, 129–149, 152–172, 180–200, 213–233, 234–254, 274–294, 346–366, 387–407, 420–440, 462–482, and 508–528; these read ALPS…VHLL, VVSA…AILF, VAQL…ASGF, APIL…ALIM, VPVS…ALKL, IGSI…LLAL, IVFI…IAQV, NYEF…VWAA, AGEV…LIVT, LLYV…IPFF, PFIA…GGEH, ISGS…SFFS, GISV…GNMV, and IIPM…LVPL.

The protein belongs to the lactate permease family.

It localises to the cell inner membrane. Its function is as follows. May play a role in L-lactate transport. This chain is Putative L-lactate permease, found in Haemophilus influenzae (strain ATCC 51907 / DSM 11121 / KW20 / Rd).